The chain runs to 130 residues: Small ribosomal subunit protein uS9 (130 aa).

Belongs to the universal ribosomal protein uS9 family.

This is Small ribosomal subunit protein uS9 from Halalkalibacterium halodurans (strain ATCC BAA-125 / DSM 18197 / FERM 7344 / JCM 9153 / C-125) (Bacillus halodurans).